The sequence spans 852 residues: G-type lectin S-receptor-like serine/threonine-protein kinase At4g03230 (852 aa).

Residues 1-19 form the signal peptide; sequence MILSVFFYMFLLHIRRLDC. In terms of domain architecture, Bulb-type lectin spans 20–154; sequence FVAVQDSKTL…GNEANVVWQS (135 aa). The Extracellular segment spans residues 20–444; it reads FVAVQDSKTL…RGRGRYGEAK (425 aa). Asn37, Asn59, Asn171, Asn187, Asn234, and Asn243 each carry an N-linked (GlcNAc...) asparagine glycan. The EGF-like domain occupies 285–321; the sequence is PRDECSVYNACGNFGSCNSKNEEMCKCLPGFRPNFLE. 2 disulfides stabilise this stretch: Cys289–Cys301 and Cys295–Cys309. A PAN domain is found at 339 to 426; it reads CGKDGVVVGD…SRNVFIRVAV (88 aa). An N-linked (GlcNAc...) asparagine glycan is attached at Asn352. 2 disulfides stabilise this stretch: Cys373–Cys400 and Cys377–Cys383. The chain crosses the membrane as a helical span at residues 445-465; the sequence is TPVVLIIVVTFTSAAILVVLS. Over 466-852 the chain is Cytoplasmic; sequence STASYVFLQR…ELTITLEDGR (387 aa). The Protein kinase domain maps to 532–819; the sequence is FSNANKLGQG…TLPTPKQPAF (288 aa). ATP contacts are provided by residues 538–546 and Lys560; that span reads LGQGGFGPV. The residue at position 566 (Ser566) is a Phosphoserine. A caM-binding region spans residues 621-638; sequence KLCQRLDWKMRCNIILGI. Asp657 functions as the Proton acceptor in the catalytic mechanism. Residues Ser661 and Ser674 each carry the phosphoserine modification. Phosphothreonine is present on Thr691. Residues 826–852 are disordered; the sequence is SSSKASSSTKPETCSENELTITLEDGR. A phosphoserine mark is found at Ser831 and Ser840. Positions 834 to 845 are enriched in polar residues; that stretch reads TKPETCSENELT. Thr847 carries the phosphothreonine modification.

Belongs to the protein kinase superfamily. Ser/Thr protein kinase family.

It localises to the cell membrane. It carries out the reaction L-seryl-[protein] + ATP = O-phospho-L-seryl-[protein] + ADP + H(+). The catalysed reaction is L-threonyl-[protein] + ATP = O-phospho-L-threonyl-[protein] + ADP + H(+). The chain is G-type lectin S-receptor-like serine/threonine-protein kinase At4g03230 from Arabidopsis thaliana (Mouse-ear cress).